The primary structure comprises 90 residues: Acylphosphatase (90 aa).

The region spanning 3-90 (RYSAIVQGRV…DGEKKFSIKY (88 aa)) is the Acylphosphatase-like domain. Active-site residues include Arg-18 and Asn-36.

It belongs to the acylphosphatase family.

It catalyses the reaction an acyl phosphate + H2O = a carboxylate + phosphate + H(+). The polypeptide is Acylphosphatase (acyP) (Clostridium beijerinckii (strain ATCC 51743 / NCIMB 8052) (Clostridium acetobutylicum)).